Consider the following 534-residue polypeptide: ATP synthase subunit beta 2 (534 aa).

Polar residues predominate over residues 1-10; that stretch reads MADPQATNGT. The disordered stretch occupies residues 1–30; sequence MADPQATNGTGAACAERDASDVGDVSDVGD. ATP is bound at residue 185–192; that stretch reads GGAGVGKT. Positions 494–505 are enriched in basic and acidic residues; that stretch reads AAAREADARREA. The interval 494-534 is disordered; sequence AAAREADARREAAAAASGAGPGTTSDPASGSAEPQGARHGR.

Belongs to the ATPase alpha/beta chains family. F-type ATPases have 2 components, CF(1) - the catalytic core - and CF(0) - the membrane proton channel. CF(1) has five subunits: alpha(3), beta(3), gamma(1), delta(1), epsilon(1). CF(0) has three main subunits: a(1), b(2) and c(9-12). The alpha and beta chains form an alternating ring which encloses part of the gamma chain. CF(1) is attached to CF(0) by a central stalk formed by the gamma and epsilon chains, while a peripheral stalk is formed by the delta and b chains.

The protein localises to the cell inner membrane. The enzyme catalyses ATP + H2O + 4 H(+)(in) = ADP + phosphate + 5 H(+)(out). In terms of biological role, produces ATP from ADP in the presence of a proton gradient across the membrane. The catalytic sites are hosted primarily by the beta subunits. This Burkholderia pseudomallei (strain 668) protein is ATP synthase subunit beta 2.